The primary structure comprises 507 residues: Maturase K (507 aa).

Belongs to the intron maturase 2 family. MatK subfamily.

Its subcellular location is the plastid. It is found in the chloroplast. Its function is as follows. Usually encoded in the trnK tRNA gene intron. Probably assists in splicing its own and other chloroplast group II introns. This Liriodendron tulipifera (Tuliptree) protein is Maturase K.